A 353-amino-acid polypeptide reads, in one-letter code: uncharacterized protein (353 aa).

The first 24 residues, 1–24 (MRVVERAVIACYLGITIFSGIAFG), serve as a signal peptide directing secretion.

This sequence belongs to the chlamydial CPn_1058/CT_355/TC_0634 family.

This is an uncharacterized protein from Chlamydia trachomatis serovar D (strain ATCC VR-885 / DSM 19411 / UW-3/Cx).